The primary structure comprises 431 residues: IMP-specific 5'-nucleotidase 1 (431 aa).

K117 serves as a coordination point for ATP. Residue D157 is the Nucleophile of the active site. Positions 157, 159, 165, 193, 349, and 357 each coordinate IMP. Mg(2+) contacts are provided by D157 and D159. D159 acts as the Proton donor in catalysis. A Mg(2+)-binding site is contributed by D388.

It belongs to the ISN1 family. As to quaternary structure, homotetramer. Mg(2+) is required as a cofactor.

The catalysed reaction is IMP + H2O = inosine + phosphate. With respect to regulation, allosterically activated by ATP. ATP binding is a prerequisite to magnesium and substrate binding. ATP binds to 2 of the subunits in the homotetramer inducing a closure of these 2 subunits and the release of the C-terminal loop, thereby activating the enzyme. Its function is as follows. IMP-specific 5'-nucleotidase involved in IMP (inositol monophosphate) degradation. This is IMP-specific 5'-nucleotidase 1 (isn-1) from Neurospora crassa (strain ATCC 24698 / 74-OR23-1A / CBS 708.71 / DSM 1257 / FGSC 987).